We begin with the raw amino-acid sequence, 935 residues long: 2-oxoglutarate dehydrogenase E1 component (935 aa).

This sequence belongs to the alpha-ketoglutarate dehydrogenase family. Homodimer. Part of the 2-oxoglutarate dehydrogenase (OGDH) complex composed of E1 (2-oxoglutarate dehydrogenase), E2 (dihydrolipoamide succinyltransferase) and E3 (dihydrolipoamide dehydrogenase); the complex contains multiple copies of the three enzymatic components (E1, E2 and E3). Requires thiamine diphosphate as cofactor.

It carries out the reaction N(6)-[(R)-lipoyl]-L-lysyl-[protein] + 2-oxoglutarate + H(+) = N(6)-[(R)-S(8)-succinyldihydrolipoyl]-L-lysyl-[protein] + CO2. Functionally, E1 component of the 2-oxoglutarate dehydrogenase (OGDH) complex which catalyzes the decarboxylation of 2-oxoglutarate, the first step in the conversion of 2-oxoglutarate to succinyl-CoA and CO(2). The polypeptide is 2-oxoglutarate dehydrogenase E1 component (sucA) (Haemophilus influenzae (strain ATCC 51907 / DSM 11121 / KW20 / Rd)).